Here is an 840-residue protein sequence, read N- to C-terminus: Cullin-4 (840 aa).

Positions 1–11 are enriched in polar residues; it reads MTSGAPPTIST. The tract at residues 1–82 is disordered; that stretch reads MTSGAPPTIS…TGNSSRTTAT (82 aa). Residues 33–48 show a composition bias toward basic and acidic residues; that stretch reads TEAKQMRGDTENRSDG. Residues 69–82 show a composition bias toward polar residues; sequence FRSQTGNSSRTTAT. The Cullin neddylation domain occupies 772–831; the sequence is DRQYKIDAAVVRIMKARKQLNHQTLMTELLQQLRFPVSTADIKKRLESLIEREYISRDPE. Lys-786 participates in a covalent cross-link: Glycyl lysine isopeptide (Lys-Gly) (interchain with G-Cter in NEDD8).

The protein belongs to the cullin family. In terms of assembly, part of an E3 ubiquitin-protein ligase complex including cul-4 and ddb-1. Post-translationally, neddylated. Deneddylated via its interaction with the COP9 signalosome (CSN) complex.

The protein operates within protein modification; protein ubiquitination. Functionally, component of cullin-based E3 ubiquitin-protein ligase complexes which mediate the ubiquitination and subsequent proteasomal degradation of target proteins. The functional specificity of the E3 ubiquitin-protein ligase complex depends on the variable substrate recognition component. In association with ddb-1 directs ubiquitination of cdt-1 during S phase and is required for restraining DNA rereplication. Probably is involved in ubiquitination of cki-1. In Caenorhabditis elegans, this protein is Cullin-4 (cul-4).